Consider the following 204-residue polypeptide: uncharacterized protein (204 aa).

Transmembrane regions (helical) follow at residues 21–50 (AWIV…LLFF), 92–114 (FFTA…WWWF), 150–172 (LGLR…VLSI), and 176–198 (LLAS…ETIL).

Its subcellular location is the cell membrane. This is an uncharacterized protein from Aquifex aeolicus (strain VF5).